Consider the following 377-residue polypeptide: Deoxyribonuclease CdiA-o11 (377 aa).

The VENN CT cleavage motif signature appears at 81–84; the sequence is VENN. The tract at residues 85-233 is inner membrane translocation domain (IMTD), targets to YciB; that stretch reads YLSTNQSLTF…ISFMSRNTAT (149 aa). The segment at 88–377 is CT domain, sufficient to interact with CdiI; sequence TNQSLTFDKE…GVKVTVTQVK (290 aa). Residues 222 to 377 are has DNase activity in vivo, cannot be expressed in the absence of CdiI; it reads AAISFMSRNT…GVKVTVTQVK (156 aa). Catalysis depends on residues E257, D278, S289, and K291. Zn(2+) contacts are provided by E257 and D278.

As to quaternary structure, interacts with cognate immunity protein CdiI-o11-EC869, which blocks its toxic DNase activity. It depends on Zn(2+) as a cofactor.

It is found in the target cell. It localises to the target cell cytoplasm. Functionally, toxic component of a toxin-immunity protein module, which functions as a cellular contact-dependent growth inhibition (CDI) system. CDI modules allow bacteria to communicate with and inhibit the growth of closely related neighboring bacteria in a contact-dependent fashion. The C-terminal 289 residues (the CT fragment) has a strong DNase activity in the presence of Zn(2+), completely degrading supercoiled and linear plasmids, and inhibits growth. In the presence of Mg(2+) it nicks dsDNA. Toxic activity is neutralized by coexpression of the cognate immunity protein CdiI-o11-EC869, but not by non-cognate immunity proteins from other toxin-immunity modules or other strains of E.coli. Gains access to the cytoplasm of target cells by using integral inner membrane protein YciB. Expression of this locus confers protection against other bacteria carrying the locus. The sequence is that of Deoxyribonuclease CdiA-o11 (cdiA4) from Escherichia coli O157:H7 (strain EC869).